The chain runs to 96 residues: Small ubiquitin-related modifier 2 (96 aa).

A Glycyl lysine isopeptide (Lys-Gly) (interchain with G-Cter in SUMO) cross-link involves residue lysine 11. The Ubiquitin-like domain occupies 16–96; that stretch reads DHINLKVAGQ…FQQQTGGHRI (81 aa). Glycine 93 is covalently cross-linked (Glycyl lysine isopeptide (Gly-Lys) (interchain with K-? in acceptor proteins)). A propeptide spanning residues 94 to 96 is cleaved from the precursor; that stretch reads HRI.

It belongs to the ubiquitin family. SUMO subfamily. Interacts with sae2 and ube2i. Covalently attached to a number of proteins. Post-translationally, polymeric chains can be formed through Lys-11 cross-linking. In terms of processing, cleavage of precursor form by a sentrin-specific protease is necessary for function.

Its subcellular location is the nucleus. In terms of biological role, ubiquitin-like protein that can be covalently attached to proteins as a monomer or as a lysine-linked polymer. Covalent attachment via an isopeptide bond to its substrates requires prior activation by the E1 complex sae1-sae2 and linkage to the E2 enzyme ube2i, and can be promoted by an E3 ligase such as pias1-4. This post-translational modification on lysine residues of proteins plays a crucial role in a number of cellular processes such as nuclear transport, DNA replication and repair, mitosis and signal transduction. Polymeric sumo2 chains are also susceptible to polyubiquitination which functions as a signal for proteasomal degradation of modified proteins. In Danio rerio (Zebrafish), this protein is Small ubiquitin-related modifier 2.